Consider the following 160-residue polypeptide: Transcription elongation factor GreA (160 aa).

Residues 49-73 (HAAKEEQSHNEGRIADLEDKLARAD) adopt a coiled-coil conformation.

It belongs to the GreA/GreB family.

Necessary for efficient RNA polymerase transcription elongation past template-encoded arresting sites. The arresting sites in DNA have the property of trapping a certain fraction of elongating RNA polymerases that pass through, resulting in locked ternary complexes. Cleavage of the nascent transcript by cleavage factors such as GreA or GreB allows the resumption of elongation from the new 3'terminus. GreA releases sequences of 2 to 3 nucleotides. This Rhodopseudomonas palustris (strain BisA53) protein is Transcription elongation factor GreA.